The chain runs to 48 residues: Fimbrial assembly protein, serogroup E2 (48 aa).

The polypeptide is Fimbrial assembly protein, serogroup E2 (fimB) (Dichelobacter nodosus (Bacteroides nodosus)).